The chain runs to 2343 residues: Pecanex-like protein 1 (2343 aa).

Transmembrane regions (helical) follow at residues 33–53 and 57–77; these read ALHLYLWLFLLGLPFTLYMAL and MIIVAVYCPVVAAVFIVLKMV. Disordered stretches follow at residues 98 to 163, 271 to 290, 306 to 691, and 749 to 826; these read FTDQ…GSSR, SHSYRKEHRPRGVPRTSSSA, QQQR…TRAR, and TRSR…QGQQ. Positions 143–163 are enriched in polar residues; that stretch reads SSRNSYAGLDPSNQIGSGSSR. Positions 272-282 are enriched in basic residues; that stretch reads HSYRKEHRPRG. Low complexity predominate over residues 372-390; the sequence is SLRSLSTRSSGSTESYCSG. The span at 396-412 shows a compositional bias: polar residues; it reads NSTLSSYKSEQTSSTHI. Basic and acidic residues-rich tracts occupy residues 416-457, 507-521, and 530-546; these read LSEH…DKTA, RPPEQSAESKEEQGE, and KVCKDDGGKQKEGDVRP. The span at 556-571 shows a compositional bias: basic residues; that stretch reads TSAHKPGRRRTGKKRA. Low complexity-rich tracts occupy residues 624–637, 769–780, and 809–826; these read SDSSSSATSHSCQS, AATGAAQASEEA, and TLLIGPPLSLQDGQQGQQ. The next 13 helical transmembrane spans lie at 978–998, 1009–1029, 1034–1054, 1068–1088, 1118–1138, 1162–1182, 1195–1215, 1268–1288, 1296–1316, 1406–1426, 1434–1454, 1458–1478, and 1493–1513; these read FWILPQLWIGINFDRLTLLAL, ILAVVLAILVAFLGSILLIQG, IWVFQFCLVIASCQYSLLKSV, IIAYSRPVYFCLCCGLIWLLD, LVIVFTLCFPIVFFIGLLPQV, LLAALYSFLCSVVAVALLYGL, HIPVLFSVFCGLLVAVSYHLS, LVVCVVIGVLYFAIHVSTVFT, YVLYALVGFVGLVTHYVLPQV, SFSSPTYQYITVIFTVLFFKF, TMLLDLFFMSILFSKLWELLY, FVYTYVAPWQITWGSAFHAFA, and AVVSALFSTPLNPFLGSAIFI. The disordered stretch occupies residues 2050 to 2120; sequence EDSDTGGGTS…VQSSLVRQSP (71 aa). Polar residues-rich tracts occupy residues 2060–2080 and 2094–2117; these read CPANSATTASDPHNSVPQGST and PTTSYPPTLGTSHSAHSVQSSLVR.

This sequence belongs to the pecanex family. Specifically expressed in the germ line and not in the somatic cells of the testis, reaching its peak at the pachytene stage of the meiotic prophase. Detected in pachytene spermatocytes and round spermatids (at protein level).

The protein resides in the membrane. This is Pecanex-like protein 1 from Rattus norvegicus (Rat).